A 520-amino-acid polypeptide reads, in one-letter code: Peptide chain release factor 3 (520 aa).

One can recognise a tr-type G domain in the interval 8 to 277 (ESRKTFAIIS…HAPMPNARQT (270 aa)). GTP contacts are provided by residues 17–24 (SHPDAGKT), 85–89 (DTPGH), and 139–142 (NKLD).

It belongs to the TRAFAC class translation factor GTPase superfamily. Classic translation factor GTPase family. PrfC subfamily.

It is found in the cytoplasm. In terms of biological role, increases the formation of ribosomal termination complexes and stimulates activities of RF-1 and RF-2. It binds guanine nucleotides and has strong preference for UGA stop codons. It may interact directly with the ribosome. The stimulation of RF-1 and RF-2 is significantly reduced by GTP and GDP, but not by GMP. The polypeptide is Peptide chain release factor 3 (Staphylococcus epidermidis (strain ATCC 35984 / DSM 28319 / BCRC 17069 / CCUG 31568 / BM 3577 / RP62A)).